Reading from the N-terminus, the 500-residue chain is Cytochrome P450 71B9 (500 aa).

Residues 1–21 (MATIWFLSLLFLCCILLAAFK) form a helical membrane-spanning segment. Cys440 serves as a coordination point for heme.

The protein belongs to the cytochrome P450 family. Heme serves as cofactor.

Its subcellular location is the membrane. This is Cytochrome P450 71B9 (CYP71B9) from Arabidopsis thaliana (Mouse-ear cress).